The sequence spans 293 residues: Phosphate-binding protein PstS 2 (293 aa).

The first 23 residues, 1-23, serve as a signal peptide directing secretion; sequence MKKHKMLSLLAVSGLMGIGILAG. Cys-24 carries N-palmitoyl cysteine lipidation. Cys-24 is lipidated: S-diacylglycerol cysteine.

The protein belongs to the PstS family. The complex is composed of two ATP-binding proteins (PstB), two transmembrane proteins (PstC and PstA) and a solute-binding protein (PstS).

It localises to the cell membrane. Part of the ABC transporter complex PstSACB involved in phosphate import. In Streptococcus agalactiae serotype III (strain NEM316), this protein is Phosphate-binding protein PstS 2 (pstS2).